We begin with the raw amino-acid sequence, 120 residues long: Large ribosomal subunit protein bL20 (120 aa).

This sequence belongs to the bacterial ribosomal protein bL20 family.

In terms of biological role, binds directly to 23S ribosomal RNA and is necessary for the in vitro assembly process of the 50S ribosomal subunit. It is not involved in the protein synthesizing functions of that subunit. The sequence is that of Large ribosomal subunit protein bL20 from Paracidovorax citrulli (strain AAC00-1) (Acidovorax citrulli).